The sequence spans 430 residues: Enolase (430 aa).

Q167 provides a ligand contact to (2R)-2-phosphoglycerate. E209 serves as the catalytic Proton donor. Residues D245, E286, and D313 each contribute to the Mg(2+) site. Positions 338, 367, 368, and 389 each coordinate (2R)-2-phosphoglycerate. The active-site Proton acceptor is the K338.

It belongs to the enolase family. The cofactor is Mg(2+).

It localises to the cytoplasm. The protein resides in the secreted. The protein localises to the cell surface. The enzyme catalyses (2R)-2-phosphoglycerate = phosphoenolpyruvate + H2O. The protein operates within carbohydrate degradation; glycolysis; pyruvate from D-glyceraldehyde 3-phosphate: step 4/5. Its function is as follows. Catalyzes the reversible conversion of 2-phosphoglycerate (2-PG) into phosphoenolpyruvate (PEP). It is essential for the degradation of carbohydrates via glycolysis. This chain is Enolase, found in Synechococcus sp. (strain CC9902).